The sequence spans 553 residues: Neutral amino acid transporter B(0) (553 aa).

N-acetylmethionine is present on Met1. At Met1 to Ala50 the chain is on the cytoplasmic side. Residues Asn51–Leu80 form a helical membrane-spanning segment. Topologically, residues Gly81–Glu93 are extracellular. Residues Leu94–Ala115 traverse the membrane as a helical segment. The Cytoplasmic portion of the chain corresponds to Ala116–Trp129. Residues Ala130–Leu152 form a helical membrane-spanning segment. Residues Lys153–Cys236 lie on the Extracellular side of the membrane. 2 N-linked (GlcNAc...) asparagine glycosylation sites follow: Asn165 and Asn228. The chain crosses the membrane as a helical span at residues Glu237 to Leu260. The Cytoplasmic portion of the chain corresponds to Gly261–Arg269. Residues Phe270–Val297 form a helical membrane-spanning segment. Residues Ala298–Ile318 lie on the Extracellular side of the membrane. Residues Leu319–Phe340 form a helical membrane-spanning segment. At Thr341 to Pro345 the chain is on the cytoplasmic side. An intramembrane region (discontinuously helical) is located at residues Tyr346 to Val376. Residues Glu377 to His385 are Cytoplasmic-facing. A helical membrane pass occupies residues Ile386–Phe412. Na(+)-binding residues include Gly394, Thr396, and Asn398. Topologically, residues Ile413 to Lys425 are extracellular. The discontinuously helical intramembrane region spans Ile426–Ser459. At Leu460–Asp472 the chain is on the extracellular side. Residues Trp473 to Leu494 form a helical membrane-spanning segment. The Na(+) site is built by Asn483 and Asp487. The Cytoplasmic portion of the chain corresponds to Gln495 to Met553. Phosphoserine is present on residues Ser505, Ser506, Ser518, Ser543, and Ser551. The segment at Pro531–Met553 is disordered. Positions Gln537–Thr546 are enriched in polar residues.

This sequence belongs to the dicarboxylate/amino acid:cation symporter (DAACS) (TC 2.A.23) family. SLC1A5 subfamily. In terms of assembly, homotrimer. In terms of tissue distribution, highly expressed in adipose tissue. Detected in lung, skeletal muscle, large intestine, kidney and testis. Expressed in lung, brain, kidney and neural retina (at protein level). Expressed in Mueller cells (at protein level).

Its subcellular location is the cell membrane. The protein localises to the melanosome. The catalysed reaction is L-glutamine(out) + L-serine(in) + Na(+)(out) = L-glutamine(in) + L-serine(out) + Na(+)(in). It catalyses the reaction L-glutamine(in) + L-serine(out) + Na(+)(out) = L-glutamine(out) + L-serine(in) + Na(+)(in). It carries out the reaction L-threonine(in) + L-glutamine(out) + Na(+)(out) = L-threonine(out) + L-glutamine(in) + Na(+)(in). The enzyme catalyses L-threonine(out) + L-glutamine(in) + Na(+)(out) = L-threonine(in) + L-glutamine(out) + Na(+)(in). The catalysed reaction is L-asparagine(in) + L-glutamine(out) + Na(+)(out) = L-asparagine(out) + L-glutamine(in) + Na(+)(in). It catalyses the reaction L-asparagine(out) + L-glutamine(in) + Na(+)(out) = L-asparagine(in) + L-glutamine(out) + Na(+)(in). It carries out the reaction L-glutamine(in) + L-alanine(out) + Na(+)(out) = L-glutamine(out) + L-alanine(in) + Na(+)(in). The enzyme catalyses L-valine(out) + L-glutamine(in) + Na(+)(out) = L-valine(in) + L-glutamine(out) + Na(+)(in). The catalysed reaction is L-glutamine(in) + L-methionine(out) + Na(+)(out) = L-glutamine(out) + L-methionine(in) + Na(+)(in). It catalyses the reaction L-glutamine(in) + L-glutamate(out) + Na(+)(out) + H(+)(out) = L-glutamine(out) + L-glutamate(in) + Na(+)(in) + H(+)(in). It carries out the reaction D-serine(in) + L-glutamine(out) + Na(+)(out) = D-serine(out) + L-glutamine(in) + Na(+)(in). The enzyme catalyses D-serine(in) + L-alanine(out) + Na(+)(out) = D-serine(out) + L-alanine(in) + Na(+)(in). The catalysed reaction is nitrate(in) = nitrate(out). It catalyses the reaction iodide(out) = iodide(in). It carries out the reaction thiocyanate(in) = thiocyanate(out). Down-regulated at acidic pH, with the exception of L-glutamate transport which is up-regulated instead. In terms of biological role, sodium-coupled antiporter of neutral amino acids. In a tri-substrate transport cycle, exchanges neutral amino acids between the extracellular and intracellular compartments, coupled to the inward cotransport of at least one sodium ion. The preferred substrate is the essential amino acid L-glutamine, a precursor for biosynthesis of proteins, nucleotides and amine sugars as well as an alternative fuel for mitochondrial oxidative phosphorylation. Exchanges L-glutamine with other neutral amino acids such as L-serine, L-threonine and L-asparagine in a bidirectional way. Provides L-glutamine to proliferating stem and activated cells driving the metabolic switch toward cell differentiation. The transport cycle is usually pH-independent, with the exception of L-glutamate. Transports extracellular L-glutamate coupled to the cotransport of one proton and one sodium ion in exchange for intracellular L-glutamine counter-ion. May provide for L-glutamate uptake in glial cells regulating glutamine/glutamate cycle in the nervous system. Can transport D-amino acids. Mediates D-serine release from the retinal glia potentially affecting NMDA receptor function in retinal neurons. Displays sodium- and amino acid-dependent but uncoupled channel-like anion conductance with a preference SCN(-) &gt;&gt; NO3(-) &gt; I(-) &gt; Cl(-). Through binding of the fusogenic protein syncytin-1/ERVW-1 may mediate trophoblasts syncytialization, the spontaneous fusion of their plasma membranes, an essential process in placental development. The protein is Neutral amino acid transporter B(0) (Slc1a5) of Mus musculus (Mouse).